We begin with the raw amino-acid sequence, 396 residues long: Zinc metalloproteinase nas-24 (396 aa).

The N-terminal stretch at 1-20 (MTRVVHIIGAAFLLSSYAYC) is a signal peptide. One can recognise a Peptidase M12A domain in the interval 44–230 (ERLGSKWLGG…YKINQYYGCG (187 aa)). 2 N-linked (GlcNAc...) asparagine glycosylation sites follow: Asn-63 and Asn-79. Intrachain disulfides connect Cys-82/Cys-229, Cys-105/Cys-129, Cys-231/Cys-251, and Cys-253/Cys-262. Zn(2+) is bound at residue His-137. Residue Glu-138 is part of the active site. The Zn(2+) site is built by His-141 and His-147. The 40-residue stretch at 224–263 (NQYYGCGCSTQLECKNGGYTSPSDCSRCNCPKGFFGKLCN) folds into the EGF-like domain. Asn-310 carries N-linked (GlcNAc...) asparagine glycosylation.

Zn(2+) is required as a cofactor.

It is found in the secreted. In terms of biological role, metalloprotease. The chain is Zinc metalloproteinase nas-24 (nas-24) from Caenorhabditis elegans.